A 420-amino-acid polypeptide reads, in one-letter code: MMSLKIQPAVPKKSDKPSATNRDCQNFKREKNNLPFQLTDKSCNLDISIRQERKKTLIFSFFSGAGFLDLGFELSGFDIAFVNEVHPPFLEAYKYSRSRMDIPKPKYGYFKGSIDECLYAEKAKDLAGWVKKEKQNGIIVGFIGGPPCPDFSIAGKNKGKDGENGKLSQSYVDLICKNQPDFFVFENVKGLYRTAKHREFFNALKRQLSDFGYVCTEKLINAIEYGVPQDRERIILVGFLSQHVDALQKFDWDAHISFPDALEKDWPTTEEVGRVVSQPANIYPELTVQYWFNRNGVDTHPNASKHFQPRAGLEKFQTISEGDDKKKSYKRLHRWRYSPTAAYGNNEVHIHPYLPRRISAAEALAIQSLPKEFELPDNMTLSNMFKTIGNGVPFLAAKGIAMTLKSYLENHYERTKTDGC.

Residues 1-23 (MMSLKIQPAVPKKSDKPSATNRD) are disordered. Residues 56 to 411 (TLIFSFFSGA…MTLKSYLENH (356 aa)) enclose the SAM-dependent MTase C5-type domain. Residue C148 is part of the active site.

This sequence belongs to the class I-like SAM-binding methyltransferase superfamily. C5-methyltransferase family.

The catalysed reaction is a 2'-deoxycytidine in DNA + S-adenosyl-L-methionine = a 5-methyl-2'-deoxycytidine in DNA + S-adenosyl-L-homocysteine + H(+). In terms of biological role, a methylase that recognizes the double-stranded sequence 5'-RCCGGB-3', methylates C-2 on both strands, and protects the DNA from cleavage by the NmeDI endonuclease. In Neisseria meningitidis serogroup C, this protein is Type II methyltransferase M.NmeDI (nmeDIMP).